A 382-amino-acid chain; its full sequence is Na(+)/H(+) antiporter NhaA 2 (382 aa).

11 consecutive transmembrane segments (helical) span residues 8 to 28 (FFSS…AAII), 49 to 69 (LSVE…MVGL), 87 to 107 (ALPG…YVWF), 115 to 135 (LAGW…VLAL), 146 to 166 (IFLS…IALF), 169 to 189 (SNIS…LFIM), 209 to 229 (FFML…ALFI), 252 to 272 (WVTF…ALSG), 286 to 306 (VALG…LLAV), 325 to 345 (VSVL…LAFA), and 353 to 373 (EVKV…MLIL).

It belongs to the NhaA Na(+)/H(+) (TC 2.A.33) antiporter family.

Its subcellular location is the cell inner membrane. The enzyme catalyses Na(+)(in) + 2 H(+)(out) = Na(+)(out) + 2 H(+)(in). Functionally, na(+)/H(+) antiporter that extrudes sodium in exchange for external protons. The polypeptide is Na(+)/H(+) antiporter NhaA 2 (Klebsiella pneumoniae subsp. pneumoniae (strain ATCC 700721 / MGH 78578)).